Consider the following 199-residue polypeptide: Holliday junction branch migration complex subunit RuvA (199 aa).

Residues 1-63 are domain I; sequence MIASVRGEVL…EDSMTLYGFS (63 aa). Residues 64–141 are domain II; that stretch reads DTESKDLFSL…DAVATTAGAA (78 aa). A flexible linker region spans residues 141 to 145; that stretch reads ASGAV. The tract at residues 146–199 is domain III; it reads VGSSIRDQIVEALEGLGFPIKQAEQATDSVLAESPEATTSVALRSALSLLGKTR.

This sequence belongs to the RuvA family. Homotetramer. Forms an RuvA(8)-RuvB(12)-Holliday junction (HJ) complex. HJ DNA is sandwiched between 2 RuvA tetramers; dsDNA enters through RuvA and exits via RuvB. An RuvB hexamer assembles on each DNA strand where it exits the tetramer. Each RuvB hexamer is contacted by two RuvA subunits (via domain III) on 2 adjacent RuvB subunits; this complex drives branch migration. In the full resolvosome a probable DNA-RuvA(4)-RuvB(12)-RuvC(2) complex forms which resolves the HJ.

The protein resides in the cytoplasm. In terms of biological role, the RuvA-RuvB-RuvC complex processes Holliday junction (HJ) DNA during genetic recombination and DNA repair, while the RuvA-RuvB complex plays an important role in the rescue of blocked DNA replication forks via replication fork reversal (RFR). RuvA specifically binds to HJ cruciform DNA, conferring on it an open structure. The RuvB hexamer acts as an ATP-dependent pump, pulling dsDNA into and through the RuvAB complex. HJ branch migration allows RuvC to scan DNA until it finds its consensus sequence, where it cleaves and resolves the cruciform DNA. The protein is Holliday junction branch migration complex subunit RuvA of Rhodococcus erythropolis (strain PR4 / NBRC 100887).